The primary structure comprises 103 residues: Histone H4 (103 aa).

Residues 1–14 (MSGRGKGGKGLGKG) show a composition bias toward gly residues. The disordered stretch occupies residues 1 to 20 (MSGRGKGGKGLGKGGAKRHR). Serine 2 bears the N-acetylserine mark. Lysine 17 carries the post-translational modification N6-acetyllysine. A DNA-binding region spans residues 17–21 (KRHRK). An N6-methyllysine modification is found at lysine 21.

It belongs to the histone H4 family. The nucleosome is a histone octamer containing two molecules each of H2A, H2B, H3 and H4 assembled in one H3-H4 heterotetramer and two H2A-H2B heterodimers. The octamer wraps approximately 147 bp of DNA.

Its subcellular location is the nucleus. The protein resides in the chromosome. Its function is as follows. Core component of nucleosome. Nucleosomes wrap and compact DNA into chromatin, limiting DNA accessibility to the cellular machineries which require DNA as a template. Histones thereby play a central role in transcription regulation, DNA repair, DNA replication and chromosomal stability. DNA accessibility is regulated via a complex set of post-translational modifications of histones, also called histone code, and nucleosome remodeling. In Eucalyptus globulus (Tasmanian blue gum), this protein is Histone H4.